A 325-amino-acid polypeptide reads, in one-letter code: MANALASATCERCKGGFAPAEKIVNSNGELYHEQCFVCAQCFQQFPEGLFYEFEGRKYCEHDFQMLFAPCCHQCGEFIIGRVIKAMNNSWHPECFRCDLCQEVLADIGFVKNAGRHLCRPCHNREKARGLGKYICQKCHAIIDEQPLIFKNDPYHPDHFNCANCGKELTADARELKGELYCLPCHDKMGVPICGACRRPIEGRVVNAMGKQWHVEHFVCAKCEKPFLGHRHYERKGLAYCETHYNQLFGDVCFHCNRVIEGDVVSALNKAWCVNCFACSTCNTKLTLKNKFVEFDMKPVCKKCYEKFPLELKKRLKKLAETLGRK.

Ala2 bears the N-acetylalanine mark. 5 LIM zinc-binding domains span residues 10 to 62, 71 to 121, 135 to 184, 193 to 243, and 252 to 303; these read CERC…CEHD, CHQC…CRPC, CQKC…CLPC, CGAC…CETH, and CFHC…CKKC.

Component of the heterotrimeric IPP (ILK-PINCH-PARVIN) complex composed of ILK, LIMS1/PINCH and PARVA; the complex binds to F-actin via the C-terminal tail of LIMS1 and the N-terminal region of PARVA, promoting F-actin filament bundling. Formation of the IPP complex is dependent on protein kinase C and precedes integrin-mediated cell adhesion and spreading. Competes with LIMS2 for interaction with ILK. Interacts (via LIM zinc-binding 5) with TGFB1I1. Interacts with SH3/SH2 adapter NCK2, thereby linking the complex to cell surface receptors. Expressed in most tissues except in the brain.

It is found in the cell junction. Its subcellular location is the focal adhesion. It localises to the cell membrane. In terms of biological role, within the IPP (ILK-PINCH-PARVIN) complex, binds to F-actin, promoting F-actin bundling, a process required to generate force for actin cytoskeleton reorganization and subsequent dynamic cell adhesion events such as cell spreading and migration. This Homo sapiens (Human) protein is LIM and senescent cell antigen-like-containing domain protein 1 (LIMS1).